Here is a 103-residue protein sequence, read N- to C-terminus: NADH-quinone oxidoreductase subunit K (103 aa).

Transmembrane regions (helical) follow at residues Leu-6–Leu-26, Leu-32–Phe-52, and Ile-63–Leu-83.

Belongs to the complex I subunit 4L family. NDH-1 is composed of 14 different subunits. Subunits NuoA, H, J, K, L, M, N constitute the membrane sector of the complex.

It is found in the cell inner membrane. It carries out the reaction a quinone + NADH + 5 H(+)(in) = a quinol + NAD(+) + 4 H(+)(out). In terms of biological role, NDH-1 shuttles electrons from NADH, via FMN and iron-sulfur (Fe-S) centers, to quinones in the respiratory chain. The immediate electron acceptor for the enzyme in this species is believed to be ubiquinone. Couples the redox reaction to proton translocation (for every two electrons transferred, four hydrogen ions are translocated across the cytoplasmic membrane), and thus conserves the redox energy in a proton gradient. The polypeptide is NADH-quinone oxidoreductase subunit K (Dechloromonas aromatica (strain RCB)).